Consider the following 472-residue polypeptide: MNVGEVVQIIGVVVDVRFPPGQVPEIYNALTIETDKVDAFGRKFNLTLEVAQHLGNNVVRTVAMSTTDGLVRGAKVVDTGAPIKVPVGRPVLGRLIDVLGMPIDGLGDIKAETYYPIHRPAPALVDQSTKVEQLETGLKVIDLLVPFMKGGKIGMFGGAGVGKTVIVMELINNIAKQHGGISVFAGVGERTREGNELLLEMTEAGVLDKTMMVFGQMNEPPGCRLRVGLTGLCLAEYFRDEEGADVLIFIDNIFRFAQAGTEVSALLGRMPSAVGYQPTLATEMGQLQERITSTTKGSITSVQAVYVPADDLTDPAPANTFAHLDGTVVLSRQIAELGIYPAVDPLDSVSRILDPNVVGQEHYQVARGVQKVLQRYKELQDIIAILGMEELSEEDKLIVARARKLQRYLSQPFHVAEAFTGTPGRYVSLKDNIRGFQEILDGKHDGLPEDAFYMVGTIEEAVEKGKKILEAS.

Residue 157–164 (GGAGVGKT) coordinates ATP.

This sequence belongs to the ATPase alpha/beta chains family. F-type ATPases have 2 components, CF(1) - the catalytic core - and CF(0) - the membrane proton channel. CF(1) has five subunits: alpha(3), beta(3), gamma(1), delta(1), epsilon(1). CF(0) has three main subunits: a(1), b(2) and c(9-12). The alpha and beta chains form an alternating ring which encloses part of the gamma chain. CF(1) is attached to CF(0) by a central stalk formed by the gamma and epsilon chains, while a peripheral stalk is formed by the delta and b chains.

The protein resides in the cell membrane. The enzyme catalyses ATP + H2O + 4 H(+)(in) = ADP + phosphate + 5 H(+)(out). Functionally, produces ATP from ADP in the presence of a proton gradient across the membrane. The catalytic sites are hosted primarily by the beta subunits. In Desulforudis audaxviator (strain MP104C), this protein is ATP synthase subunit beta.